The following is an 88-amino-acid chain: Small ribosomal subunit protein uS15 (88 aa).

It belongs to the universal ribosomal protein uS15 family. In terms of assembly, part of the 30S ribosomal subunit. Forms a bridge to the 50S subunit in the 70S ribosome, contacting the 23S rRNA.

Its function is as follows. One of the primary rRNA binding proteins, it binds directly to 16S rRNA where it helps nucleate assembly of the platform of the 30S subunit by binding and bridging several RNA helices of the 16S rRNA. Forms an intersubunit bridge (bridge B4) with the 23S rRNA of the 50S subunit in the ribosome. The sequence is that of Small ribosomal subunit protein uS15 from Borreliella afzelii (strain PKo) (Borrelia afzelii).